Here is a 271-residue protein sequence, read N- to C-terminus: Tryptophan synthase alpha chain (271 aa).

Catalysis depends on proton acceptor residues E49 and D60.

It belongs to the TrpA family. As to quaternary structure, tetramer of two alpha and two beta chains.

It catalyses the reaction (1S,2R)-1-C-(indol-3-yl)glycerol 3-phosphate + L-serine = D-glyceraldehyde 3-phosphate + L-tryptophan + H2O. It functions in the pathway amino-acid biosynthesis; L-tryptophan biosynthesis; L-tryptophan from chorismate: step 5/5. Its function is as follows. The alpha subunit is responsible for the aldol cleavage of indoleglycerol phosphate to indole and glyceraldehyde 3-phosphate. The sequence is that of Tryptophan synthase alpha chain from Nitrosococcus oceani (strain ATCC 19707 / BCRC 17464 / JCM 30415 / NCIMB 11848 / C-107).